Consider the following 430-residue polypeptide: Probable sulfoacetate transporter SauU (430 aa).

A run of 10 helical transmembrane segments spans residues 47 to 67, 83 to 103, 142 to 162, 165 to 185, 228 to 248, 263 to 283, 301 to 321, 327 to 347, 362 to 382, and 390 to 410; these read LGLVFSAFAYPYAAMQILGGW, LIWGVATVLTGFAGSVLILVV, FARLGGAITPPVVLVIVAAAG, EAFIVLGAVSLGWTLLYAFFF, WLVTFVDFCYGWSLWVYLTWL, LALFTALPLMAGVVGDTLGGV, AVLFVGLAGSLMFIAPMTFTA, VILLSLSFFFLELTNAVLWSL, MMNTGFGVAGMVSPVVFGYLI, and LPFMISGALLGVGALASLFIN.

Belongs to the major facilitator superfamily.

The protein localises to the cell membrane. In terms of biological role, may transport sulfoacetate into the cell. The chain is Probable sulfoacetate transporter SauU (sauU) from Cupriavidus necator (strain ATCC 17699 / DSM 428 / KCTC 22496 / NCIMB 10442 / H16 / Stanier 337) (Ralstonia eutropha).